The primary structure comprises 88 residues: MSSRRSSRGSISEEEINELISKLQSLLPNSRRRGSSQASTTKLLKETCNYIKSLHREVDDLSDRLSDLMATMDHNSPGAEIIRSILRS.

In terms of domain architecture, bHLH spans 1–54; sequence MSSRRSSRGSISEEEINELISKLQSLLPNSRRRGSSQASTTKLLKETCNYIKSL.

The protein belongs to the bHLH protein family. In terms of assembly, interacts with APG.

It is found in the nucleus. Functionally, atypical and probable non DNA-binding bHLH transcription factor that acts as a positive regulator of grain size. Binds the transcription repressor APG and forms a heterodimer of antagonistic basic helix-loop-helix transcription factors that regulates grain length and weight by controlling cell elongation in lemma and palea. The chain is Transcription factor ILI5 (ILI5) from Oryza sativa subsp. indica (Rice).